Reading from the N-terminus, the 511-residue chain is Maturase K (511 aa).

This sequence belongs to the intron maturase 2 family. MatK subfamily.

The protein localises to the plastid. Its subcellular location is the chloroplast. Usually encoded in the trnK tRNA gene intron. Probably assists in splicing its own and other chloroplast group II introns. This is Maturase K from Adesmia lanata.